A 454-amino-acid chain; its full sequence is Bifunctional protein GlmU (454 aa).

The interval 1-227 is pyrophosphorylase; the sequence is MKKLSVVILA…KMEVEGANNR (227 aa). UDP-N-acetyl-alpha-D-glucosamine contacts are provided by residues 9-12, Lys-23, Gln-74, 79-80, 101-103, Gly-138, Glu-152, Asn-167, and Asn-225; these read LAAG, GT, and YGD. Residue Asp-103 participates in Mg(2+) binding. Asn-225 serves as a coordination point for Mg(2+). The interval 228–248 is linker; sequence LQLAALERYYQHKQAERLLLE. Positions 249–454 are N-acetyltransferase; it reads GVMLIDPARF…AGWQRPTKKK (206 aa). Arg-331 and Lys-349 together coordinate UDP-N-acetyl-alpha-D-glucosamine. His-361 (proton acceptor) is an active-site residue. UDP-N-acetyl-alpha-D-glucosamine contacts are provided by Tyr-364 and Asn-375. Residues Ala-378, 384 to 385, Ser-403, Ala-421, and Arg-438 each bind acetyl-CoA; that span reads NY.

In the N-terminal section; belongs to the N-acetylglucosamine-1-phosphate uridyltransferase family. The protein in the C-terminal section; belongs to the transferase hexapeptide repeat family. Homotrimer. Mg(2+) is required as a cofactor.

The protein resides in the cytoplasm. The enzyme catalyses alpha-D-glucosamine 1-phosphate + acetyl-CoA = N-acetyl-alpha-D-glucosamine 1-phosphate + CoA + H(+). It catalyses the reaction N-acetyl-alpha-D-glucosamine 1-phosphate + UTP + H(+) = UDP-N-acetyl-alpha-D-glucosamine + diphosphate. It participates in nucleotide-sugar biosynthesis; UDP-N-acetyl-alpha-D-glucosamine biosynthesis; N-acetyl-alpha-D-glucosamine 1-phosphate from alpha-D-glucosamine 6-phosphate (route II): step 2/2. Its pathway is nucleotide-sugar biosynthesis; UDP-N-acetyl-alpha-D-glucosamine biosynthesis; UDP-N-acetyl-alpha-D-glucosamine from N-acetyl-alpha-D-glucosamine 1-phosphate: step 1/1. The protein operates within bacterial outer membrane biogenesis; LPS lipid A biosynthesis. Its function is as follows. Catalyzes the last two sequential reactions in the de novo biosynthetic pathway for UDP-N-acetylglucosamine (UDP-GlcNAc). The C-terminal domain catalyzes the transfer of acetyl group from acetyl coenzyme A to glucosamine-1-phosphate (GlcN-1-P) to produce N-acetylglucosamine-1-phosphate (GlcNAc-1-P), which is converted into UDP-GlcNAc by the transfer of uridine 5-monophosphate (from uridine 5-triphosphate), a reaction catalyzed by the N-terminal domain. The protein is Bifunctional protein GlmU of Mannheimia succiniciproducens (strain KCTC 0769BP / MBEL55E).